A 537-amino-acid polypeptide reads, in one-letter code: Actin-histidine N-methyltransferase (537 aa).

Basic residues predominate over residues 1–12 (MGKNTKRNKKTK). The disordered stretch occupies residues 1–50 (MGKNTKRNKKTKQQQQQPQQNGVTASASGTAVEDFEDQQAASSLPSLNGK). Residues R114, 143–145 (YQL), R299, 325–329 (DMANH), and 375–377 (NGF) contribute to the S-adenosyl-L-methionine site. An SET domain is found at 133 to 364 (EGLEIAIFPG…TGEQFFIYYG (232 aa)).

The protein belongs to the class V-like SAM-binding methyltransferase superfamily. SETD3 actin-histidine methyltransferase family.

The protein resides in the cytoplasm. The protein localises to the nucleus. The catalysed reaction is L-histidyl-[protein] + S-adenosyl-L-methionine = N(tele)-methyl-L-histidyl-[protein] + S-adenosyl-L-homocysteine + H(+). Its function is as follows. Protein-histidine N-methyltransferase that specifically mediates 3-methylhistidine (tele-methylhistidine) methylation of actin at 'His-74'. The protein is Actin-histidine N-methyltransferase of Drosophila melanogaster (Fruit fly).